The primary structure comprises 219 residues: Ribonuclease HII (219 aa).

An RNase H type-2 domain is found at 30 to 219 (RVIAGIDEAG…VREHVTCPSS (190 aa)). 3 residues coordinate a divalent metal cation: Asp36, Glu37, and Asp128.

It belongs to the RNase HII family. It depends on Mn(2+) as a cofactor. Mg(2+) is required as a cofactor.

Its subcellular location is the cytoplasm. The enzyme catalyses Endonucleolytic cleavage to 5'-phosphomonoester.. Endonuclease that specifically degrades the RNA of RNA-DNA hybrids. The chain is Ribonuclease HII from Pelobacter propionicus (strain DSM 2379 / NBRC 103807 / OttBd1).